A 231-amino-acid chain; its full sequence is Large ribosomal subunit protein uL1 (231 aa).

Belongs to the universal ribosomal protein uL1 family. As to quaternary structure, part of the 50S ribosomal subunit.

Its function is as follows. Binds directly to 23S rRNA. The L1 stalk is quite mobile in the ribosome, and is involved in E site tRNA release. In terms of biological role, protein L1 is also a translational repressor protein, it controls the translation of the L11 operon by binding to its mRNA. The sequence is that of Large ribosomal subunit protein uL1 from Beijerinckia indica subsp. indica (strain ATCC 9039 / DSM 1715 / NCIMB 8712).